A 390-amino-acid polypeptide reads, in one-letter code: Acetylornithine aminotransferase (390 aa).

Residues glycine 103–threonine 104 and phenylalanine 129 contribute to the pyridoxal 5'-phosphate site. Residue arginine 132 participates in N(2)-acetyl-L-ornithine binding. Aspartate 214–glutamine 217 contributes to the pyridoxal 5'-phosphate binding site. Position 243 is an N6-(pyridoxal phosphate)lysine (lysine 243). Position 271 (serine 271) interacts with N(2)-acetyl-L-ornithine. Pyridoxal 5'-phosphate is bound at residue threonine 272. Residue lysine 304 forms an Isoglutamyl lysine isopeptide (Lys-Gln) (interchain with Q-Cter in protein Pup) linkage.

The protein belongs to the class-III pyridoxal-phosphate-dependent aminotransferase family. ArgD subfamily. As to quaternary structure, homodimer. Requires pyridoxal 5'-phosphate as cofactor.

It localises to the cytoplasm. It catalyses the reaction N(2)-acetyl-L-ornithine + 2-oxoglutarate = N-acetyl-L-glutamate 5-semialdehyde + L-glutamate. It functions in the pathway amino-acid biosynthesis; L-arginine biosynthesis; N(2)-acetyl-L-ornithine from L-glutamate: step 4/4. The polypeptide is Acetylornithine aminotransferase (Mycolicibacterium smegmatis (strain ATCC 700084 / mc(2)155) (Mycobacterium smegmatis)).